Consider the following 245-residue polypeptide: 1-(5-phosphoribosyl)-5-[(5-phosphoribosylamino)methylideneamino] imidazole-4-carboxamide isomerase (245 aa).

Asp-8 acts as the Proton acceptor in catalysis. The active-site Proton donor is the Asp-129.

Belongs to the HisA/HisF family.

It is found in the cytoplasm. The enzyme catalyses 1-(5-phospho-beta-D-ribosyl)-5-[(5-phospho-beta-D-ribosylamino)methylideneamino]imidazole-4-carboxamide = 5-[(5-phospho-1-deoxy-D-ribulos-1-ylimino)methylamino]-1-(5-phospho-beta-D-ribosyl)imidazole-4-carboxamide. It functions in the pathway amino-acid biosynthesis; L-histidine biosynthesis; L-histidine from 5-phospho-alpha-D-ribose 1-diphosphate: step 4/9. This Rhodopseudomonas palustris (strain BisB5) protein is 1-(5-phosphoribosyl)-5-[(5-phosphoribosylamino)methylideneamino] imidazole-4-carboxamide isomerase.